Reading from the N-terminus, the 104-residue chain is Co-chaperonin GroES 5 (104 aa).

It belongs to the GroES chaperonin family. Heptamer of 7 subunits arranged in a ring. Interacts with the chaperonin GroEL.

Its subcellular location is the cytoplasm. Its function is as follows. Together with the chaperonin GroEL, plays an essential role in assisting protein folding. The GroEL-GroES system forms a nano-cage that allows encapsulation of the non-native substrate proteins and provides a physical environment optimized to promote and accelerate protein folding. GroES binds to the apical surface of the GroEL ring, thereby capping the opening of the GroEL channel. The protein is Co-chaperonin GroES 5 of Rhizobium meliloti (strain 1021) (Ensifer meliloti).